The following is a 504-amino-acid chain: Ribose import ATP-binding protein RbsA 3 (504 aa).

2 ABC transporter domains span residues 6 to 238 and 251 to 494; these read ANLK…VGRP and IGAE…MMGG. Residue 38–45 participates in ATP binding; sequence GENGAGKS.

Belongs to the ABC transporter superfamily. Ribose importer (TC 3.A.1.2.1) family. In terms of assembly, the complex is composed of an ATP-binding protein (RbsA), two transmembrane proteins (RbsC) and a solute-binding protein (RbsB).

It is found in the cell inner membrane. The enzyme catalyses D-ribose(out) + ATP + H2O = D-ribose(in) + ADP + phosphate + H(+). Part of the ABC transporter complex RbsABC involved in ribose import. Responsible for energy coupling to the transport system. The polypeptide is Ribose import ATP-binding protein RbsA 3 (Rhizobium meliloti (strain 1021) (Ensifer meliloti)).